Here is a 201-residue protein sequence, read N- to C-terminus: Probable cytokinin riboside 5'-monophosphate phosphoribohydrolase LOG6 (201 aa).

Substrate-binding positions include glutamate 89, 107–108, 124–130, and threonine 136; these read RK and GYGTLEE.

The protein belongs to the LOG family.

It catalyses the reaction N(6)-(dimethylallyl)adenosine 5'-phosphate + H2O = N(6)-dimethylallyladenine + D-ribose 5-phosphate. It carries out the reaction 9-ribosyl-trans-zeatin 5'-phosphate + H2O = trans-zeatin + D-ribose 5-phosphate. Functionally, cytokinin-activating enzyme working in the direct activation pathway. Phosphoribohydrolase that converts inactive cytokinin nucleotides to the biologically active free-base forms. This is Probable cytokinin riboside 5'-monophosphate phosphoribohydrolase LOG6 (LOG6) from Arabidopsis thaliana (Mouse-ear cress).